Here is a 354-residue protein sequence, read N- to C-terminus: Glycine betaine/proline betaine transport system permease protein ProW (354 aa).

The segment at 1-28 (MADQTNPWDTAQVADTTTQTADAWGTPA) is disordered. Residues 1–99 (MADQTNPWDT…VDYILNGFQQ (99 aa)) are Cytoplasmic-facing. Positions 9–23 (DTAQVADTTTQTADA) are enriched in low complexity. A helical transmembrane segment spans residues 100-120 (LLLGMPAPVAIILFALIAWQV). A topological domain (periplasmic) is located at residue S121. A helical transmembrane segment spans residues 122–142 (GVGMGIATLISLIAIGAIGAW). At 143 to 148 (SQAMIT) the chain is on the cytoplasmic side. The region spanning 145 to 324 (AMITLALVLT…ILAIILDRLT (180 aa)) is the ABC transmembrane type-1 domain. The helical transmembrane segment at 149 to 169 (LALVLTALLFCVVIGLPMGIW) threads the bilayer. The Periplasmic portion of the chain corresponds to 170–198 (LARSPRAAKIVRPLLDAMQTTPAFVYLVP). A helical transmembrane segment spans residues 199–219 (IVMLFGIGNVPGVVVTIIFAL). At 220-270 (PPIVRLTILGINQVPADLIEASRSFGASPRQMLFKVQLPLAMPTIMAGVNQ) the chain is on the cytoplasmic side. A helical membrane pass occupies residues 271–291 (TLMLALSMVVIASMIAVGGLG). Residues 292–300 (QMVLRGIGR) are Periplasmic-facing. A helical membrane pass occupies residues 301 to 321 (LDMGLATVGGVGIVILAIILD). Topologically, residues 322–354 (RLTQAVGRDSRSRGNRRWYTTGPVGLITRPFVK) are cytoplasmic.

This sequence belongs to the binding-protein-dependent transport system permease family. CysTW subfamily. As to quaternary structure, the complex is composed of two ATP-binding proteins (ProV), two transmembrane proteins (ProW) and a solute-binding protein (ProX).

The protein resides in the cell inner membrane. In terms of biological role, part of the ProU ABC transporter complex involved in glycine betaine and proline betaine uptake. Probably responsible for the translocation of the substrate across the membrane. The chain is Glycine betaine/proline betaine transport system permease protein ProW from Salmonella typhimurium (strain LT2 / SGSC1412 / ATCC 700720).